We begin with the raw amino-acid sequence, 247 residues long: Eukaryotic translation initiation factor 6 (247 aa).

Ser-174 and Ser-175 each carry phosphoserine; by CK1.

Belongs to the eIF-6 family. Monomer. Associates with the 60S ribosomal subunit. Post-translationally, phosphorylation at Ser-174 and Ser-175 promotes nuclear export.

It is found in the cytoplasm. The protein resides in the nucleus. It localises to the nucleolus. Functionally, binds to the 60S ribosomal subunit and prevents its association with the 40S ribosomal subunit to form the 80S initiation complex in the cytoplasm. Is also involved in ribosome biogenesis. Associates with pre-60S subunits in the nucleus and is involved in its nuclear export. This chain is Eukaryotic translation initiation factor 6 (tif6), found in Emericella nidulans (strain FGSC A4 / ATCC 38163 / CBS 112.46 / NRRL 194 / M139) (Aspergillus nidulans).